Here is a 595-residue protein sequence, read N- to C-terminus: Chaperone protein HscA homolog (595 aa).

It belongs to the heat shock protein 70 family.

In terms of biological role, chaperone involved in the maturation of iron-sulfur cluster-containing proteins. Has a low intrinsic ATPase activity which is markedly stimulated by HscB. This is Chaperone protein HscA homolog from Rickettsia akari (strain Hartford).